The following is a 434-amino-acid chain: Zinc finger protein Pegasus (434 aa).

A disordered region spans residues 33-57; it reads VSSDKEAETLQGAGTDSDQNGLDHP. 3 C2H2-type zinc fingers span residues 82–104, 110–132, and 138–161; these read LKCR…IRIH, HRCH…MRSH, and YKCE…RRKH. Over residues 260–274 the composition is skewed to polar residues; sequence GQLSSLPPDTQNPAS. Positions 260-357 are disordered; that stretch reads GQLSSLPPDT…PSTPAPALPA (98 aa). A compositionally biased stretch (low complexity) spans 296-313; that stretch reads CASAVSTSVAQSSSPASP. The span at 337–349 shows a compositional bias: polar residues; that stretch reads RTSTPSISNSQPS. 2 consecutive C2H2-type zinc fingers follow at residues 364 to 386 and 392 to 419; these read HHCQ…MGCH and FQCN…CCQH.

It belongs to the Ikaros C2H2-type zinc-finger protein family. In terms of assembly, probably self-associates.

The protein resides in the nucleus. Its function is as follows. Transcriptional repressor that binds the core 5'GNNTGTNG-3' DNA consensus sequence. The protein is Zinc finger protein Pegasus (ikzf5) of Xenopus tropicalis (Western clawed frog).